Consider the following 478-residue polypeptide: Glycogen synthase (478 aa).

Lys20 is an ADP-alpha-D-glucose binding site.

Belongs to the glycosyltransferase 1 family. Bacterial/plant glycogen synthase subfamily.

The enzyme catalyses [(1-&gt;4)-alpha-D-glucosyl](n) + ADP-alpha-D-glucose = [(1-&gt;4)-alpha-D-glucosyl](n+1) + ADP + H(+). It participates in glycan biosynthesis; glycogen biosynthesis. Its function is as follows. Synthesizes alpha-1,4-glucan chains using ADP-glucose. In Cereibacter sphaeroides (strain ATCC 17025 / ATH 2.4.3) (Rhodobacter sphaeroides), this protein is Glycogen synthase.